Reading from the N-terminus, the 433-residue chain is Homoserine dehydrogenase (433 aa).

NADPH-binding residues include Thr13 and Val14. NAD(+) is bound by residues Val14 and Val33. An NADP(+)-binding site is contributed by Val14. NADPH contacts are provided by Lys45 and Lys105. Residues Lys45 and Lys105 each contribute to the NADP(+) site. Residues Glu129, Val132, Gly134, and Ile136 each coordinate Na(+). NADP(+) is bound by residues Gly187 and Glu190. The L-homoserine site is built by Glu190 and Asp201. The active-site Proton donor is the Lys205. Gly302 is a binding site for NADPH. An NAD(+)-binding site is contributed by Gly302. Gly302 contributes to the NADP(+) binding site. Positions 350 to 426 (FLRIHVKDEV…VVQEVKSTYR (77 aa)) constitute an ACT domain.

It belongs to the homoserine dehydrogenase family. Homotetramer. A metal cation is required as a cofactor.

Its subcellular location is the cytoplasm. The protein localises to the secreted. It catalyses the reaction L-homoserine + NADP(+) = L-aspartate 4-semialdehyde + NADPH + H(+). It functions in the pathway amino-acid biosynthesis; L-methionine biosynthesis via de novo pathway; L-homoserine from L-aspartate: step 3/3. Its pathway is amino-acid biosynthesis; L-threonine biosynthesis; L-threonine from L-aspartate: step 3/5. Its activity is regulated as follows. Feedback inhibition by threonine. Activated by sodium ions. Its function is as follows. Catalyzes the conversion of L-aspartate-beta-semialdehyde (L-Asa) to L-homoserine (L-Hse), the third step in the biosynthesis of threonine and methionine from aspartate. Utilizes NADPH but not NADH as coenzyme. This is Homoserine dehydrogenase (hom) from Bacillus subtilis (strain 168).